The following is a 268-amino-acid chain: Hydroxyethylthiazole kinase (268 aa).

M47 contacts substrate. ATP is bound by residues K123 and T170. Substrate is bound at residue A196.

It belongs to the Thz kinase family. It depends on Mg(2+) as a cofactor.

The catalysed reaction is 5-(2-hydroxyethyl)-4-methylthiazole + ATP = 4-methyl-5-(2-phosphooxyethyl)-thiazole + ADP + H(+). Its pathway is cofactor biosynthesis; thiamine diphosphate biosynthesis; 4-methyl-5-(2-phosphoethyl)-thiazole from 5-(2-hydroxyethyl)-4-methylthiazole: step 1/1. In terms of biological role, catalyzes the phosphorylation of the hydroxyl group of 4-methyl-5-beta-hydroxyethylthiazole (THZ). The sequence is that of Hydroxyethylthiazole kinase from Finegoldia magna (strain ATCC 29328 / DSM 20472 / WAL 2508) (Peptostreptococcus magnus).